A 515-amino-acid chain; its full sequence is uncharacterized protein (515 aa).

The interval 146–171 (SSEVDRNSETEGTREENSNTSDWDEQ) is disordered. Basic and acidic residues predominate over residues 148–162 (EVDRNSETEGTREEN).

It is found in the cytoplasm. Its subcellular location is the nucleus. This is an uncharacterized protein from Schizosaccharomyces pombe (strain 972 / ATCC 24843) (Fission yeast).